The chain runs to 144 residues: MAKKVQAYIKLQVKAGQANPSPPVGPALGQHGVNIMEFCKAFNAKTQSLEPGLPTPVIITVYSDRSFTFETKSTPAAVLLKKAAGLKSGSPRPNTQKVGTVTRAQLEEIVVAKQADLTASNMDAAVRTIAGSARAMGLEVEGVN.

Belongs to the universal ribosomal protein uL11 family. Part of the ribosomal stalk of the 50S ribosomal subunit. Interacts with L10 and the large rRNA to form the base of the stalk. L10 forms an elongated spine to which L12 dimers bind in a sequential fashion forming a multimeric L10(L12)X complex. One or more lysine residues are methylated.

Forms part of the ribosomal stalk which helps the ribosome interact with GTP-bound translation factors. The sequence is that of Large ribosomal subunit protein uL11 from Marinomonas sp. (strain MWYL1).